The chain runs to 155 residues: DNA gyrase inhibitor (155 aa).

This sequence belongs to the DNA gyrase inhibitor family. Interacts with DNA gyrase.

The protein localises to the cytoplasm. Inhibits the supercoiling activity of DNA gyrase. Acts by inhibiting DNA gyrase at an early step, prior to (or at the step of) binding of DNA by the gyrase. It protects cells against toxins that target DNA gyrase, by inhibiting activity of these toxins and reducing the formation of lethal double-strand breaks in the cell. The polypeptide is DNA gyrase inhibitor (Escherichia fergusonii (strain ATCC 35469 / DSM 13698 / CCUG 18766 / IAM 14443 / JCM 21226 / LMG 7866 / NBRC 102419 / NCTC 12128 / CDC 0568-73)).